The chain runs to 141 residues: Protein X (141 aa).

A disordered region spans residues 25–52 (SSGPSFPRPAAGSAASSASSPSPSDDSD). Residues 68–113 (PCCLVFTCADLRTMDSTVNFVSWHANRQLGMPSKDLWTPYIKDQLL) form a mitochondrial targeting sequence region.

It belongs to the orthohepadnavirus protein X family. As to quaternary structure, may form homodimer. May interact with host CEBPA, CFLAR, CREB1, DDB1, E4F1, HBXIP, HSPD1/HSP60, NFKBIA, POLR2E and SMAD4. Interacts with host SMC5-SMC6 complex and induces its degradation. Interacts with host TRPC4AP; leading to prevent ubiquitination of TRPC4AP. Interacts with host PLSCR1; this interaction promotes ubiquitination and degradation of HBx and impairs HBx-mediated cell proliferation. A fraction may be phosphorylated in insect cells and HepG2 cells, a human hepatoblastoma cell line. Phosphorylated in vitro by host protein kinase C or mitogen-activated protein kinase. N-acetylated in insect cells.

The protein localises to the host cytoplasm. Its subcellular location is the host nucleus. It localises to the host mitochondrion. In terms of biological role, multifunctional protein that plays a role in silencing host antiviral defenses and promoting viral transcription. Does not seem to be essential for HBV infection. May be directly involved in development of cirrhosis and liver cancer (hepatocellular carcinoma). Most of cytosolic activities involve modulation of cytosolic calcium. The effect on apoptosis is controversial depending on the cell types in which the studies have been conducted. May induce apoptosis by localizing in mitochondria and causing loss of mitochondrial membrane potential. May also modulate apoptosis by binding host CFLAR, a key regulator of the death-inducing signaling complex (DISC). Promotes viral transcription by using the host E3 ubiquitin ligase DDB1 to target the SMC5-SMC6 complex to proteasomal degradation. This host complex would otherwise bind to viral episomal DNA, and prevents its transcription. Moderately stimulates transcription of many different viral and cellular transcription elements. Promoters and enhancers stimulated by HBx contain DNA binding sites for NF-kappa-B, AP-1, AP-2, c-EBP, ATF/CREB, or the calcium-activated factor NF-AT. The chain is Protein X from Woodchuck hepatitis B virus (isolate 2) (WHV).